Consider the following 434-residue polypeptide: Adenylosuccinate synthetase (434 aa).

GTP contacts are provided by residues 22–28 (GDEGKGK) and 50–52 (GHT). Aspartate 23 acts as the Proton acceptor in catalysis. Positions 23 and 50 each coordinate Mg(2+). Residues 23-26 (DEGK), 48-51 (NAGH), threonine 139, arginine 153, glutamine 234, threonine 249, and arginine 313 contribute to the IMP site. Catalysis depends on histidine 51, which acts as the Proton donor. Position 309–315 (309–315 (ATTGRKR)) interacts with substrate. GTP is bound by residues arginine 315, 341–343 (KLD), and 423–425 (SVG).

This sequence belongs to the adenylosuccinate synthetase family. As to quaternary structure, homodimer. Mg(2+) is required as a cofactor.

It localises to the cytoplasm. It carries out the reaction IMP + L-aspartate + GTP = N(6)-(1,2-dicarboxyethyl)-AMP + GDP + phosphate + 2 H(+). It participates in purine metabolism; AMP biosynthesis via de novo pathway; AMP from IMP: step 1/2. Functionally, plays an important role in the de novo pathway of purine nucleotide biosynthesis. Catalyzes the first committed step in the biosynthesis of AMP from IMP. This chain is Adenylosuccinate synthetase, found in Chlorobium limicola (strain DSM 245 / NBRC 103803 / 6330).